The sequence spans 323 residues: MNQLLCPGLYCPFPSQTNKYVDVLEEYSLEWVLRFNLLANESAYKRFCKSKFFFLAASAYPDSKFEELKITHDWLSWVFIWDDQCDLSELKKQPEVLNNFHQRYLEILNGAELTSQDTLFSHALIDLRKRTLQRASIKWFNYFISYLEDYFYGCVQEATNRAKGIVPDLDTYIMIRRSSVGVYAVLALSEFCNQFIIPDVLRNHHLVKKLELITTDIIAWSNDIFSASREIASGDVHNLIFVLHYHKKISLEKAIEQVVKIHNEEVHSLIKVESSLSFFSEELDVEITKYISGMHSWIRGNLDWCYESYRYHNLERLELTEFK.

Residues D82, D86, N222, S226, and E230 each contribute to the Mg(2+) site. The DDXXD motif motif lies at D82 to D86.

This sequence belongs to the terpene synthase family. It depends on Mg(2+) as a cofactor.

The enzyme catalyses (2E,6E)-farnesyl diphosphate = 5-epi-alpha-selinene + diphosphate. In terms of biological role, catalyzes the cyclization of farnesyl diphosphate (FPP) to the sesquiterpene germacrene A. The protein is Germacrene A synthase of Nostoc punctiforme (strain ATCC 29133 / PCC 73102).